We begin with the raw amino-acid sequence, 308 residues long: Protein translocase subunit SecF (308 aa).

The next 6 helical transmembrane spans lie at 22 to 42 (AVSYSFSIILSLISFIWIGIY), 140 to 160 (IEAGAMAMLSSFLAIMVYIWV), 164 to 184 (WYFGLGILIALVHDVILALGF), 194 to 214 (LSTIAAVLTIIGYSVNDSVVI), 246 to 266 (ILTVITTLLANLALMLFGGEA), and 272 to 292 (VLVFFGIIAGTYSSIFISAPI).

Belongs to the SecD/SecF family. SecF subfamily. As to quaternary structure, forms a complex with SecD. Part of the essential Sec protein translocation apparatus which comprises SecA, SecYEG and auxiliary proteins SecDF-YajC and YidC.

It is found in the cell inner membrane. Part of the Sec protein translocase complex. Interacts with the SecYEG preprotein conducting channel. SecDF uses the proton motive force (PMF) to complete protein translocation after the ATP-dependent function of SecA. The protein is Protein translocase subunit SecF of Rickettsia akari (strain Hartford).